Consider the following 249-residue polypeptide: MKAIKNKGQDKTMNETTHRFARLVDLSAVQATSTEADVRACAELAARYNIISVHVLPCWTRFLSTLLPQQGTGEVMIGGPVGFPGGGHTTDTKVQEVRQLIADGAREVDMVVNIGKVLSGDYDYVREDLRRVVEAAAPVPAKVILETHYLNEEQIRRVCEIAVEVGMKWVKTSTGWAPTGATVEKVRIIADQLKGRIDIKGAGGIRDLATVRALYQLGVRRFGMSHGAVTKVLAELEQHPERFPELNAD.

Asp109 serves as the catalytic Proton donor/acceptor. Residue Lys171 is the Schiff-base intermediate with acetaldehyde of the active site. The active-site Proton donor/acceptor is the Lys200.

Belongs to the DeoC/FbaB aldolase family. DeoC type 1 subfamily.

It is found in the cytoplasm. It carries out the reaction 2-deoxy-D-ribose 5-phosphate = D-glyceraldehyde 3-phosphate + acetaldehyde. Its pathway is carbohydrate degradation; 2-deoxy-D-ribose 1-phosphate degradation; D-glyceraldehyde 3-phosphate and acetaldehyde from 2-deoxy-alpha-D-ribose 1-phosphate: step 2/2. Functionally, catalyzes a reversible aldol reaction between acetaldehyde and D-glyceraldehyde 3-phosphate to generate 2-deoxy-D-ribose 5-phosphate. The chain is Deoxyribose-phosphate aldolase from Klebsiella pneumoniae subsp. pneumoniae (strain ATCC 700721 / MGH 78578).